Consider the following 120-residue polypeptide: Large ribosomal subunit protein eL34 (120 aa).

It belongs to the eukaryotic ribosomal protein eL34 family.

The protein is Large ribosomal subunit protein eL34 (RPL34) of Pisum sativum (Garden pea).